A 185-amino-acid chain; its full sequence is Translation initiation factor IF-3 (185 aa).

Belongs to the IF-3 family. As to quaternary structure, monomer.

It is found in the cytoplasm. In terms of biological role, IF-3 binds to the 30S ribosomal subunit and shifts the equilibrium between 70S ribosomes and their 50S and 30S subunits in favor of the free subunits, thus enhancing the availability of 30S subunits on which protein synthesis initiation begins. The sequence is that of Translation initiation factor IF-3 from Rickettsia typhi (strain ATCC VR-144 / Wilmington).